Here is a 157-residue protein sequence, read N- to C-terminus: Protein Smg homolog (157 aa).

It belongs to the Smg family.

This Xanthomonas euvesicatoria pv. vesicatoria (strain 85-10) (Xanthomonas campestris pv. vesicatoria) protein is Protein Smg homolog.